A 346-amino-acid polypeptide reads, in one-letter code: Very-long-chain 3-oxoacyl-CoA reductase (346 aa).

The helical transmembrane segment at 23 to 43 (AAWIVFGLGISKMVFLTLNFS) threads the bilayer. NADP(+) is bound by residues V69, D123, N150, Y222, K226, V255, and S257. The Proton donor role is filled by Y222. The active-site Lowers pKa of active site Tyr is the K226.

This sequence belongs to the short-chain dehydrogenases/reductases (SDR) family.

It localises to the endoplasmic reticulum membrane. The catalysed reaction is a very-long-chain (3R)-3-hydroxyacyl-CoA + NADP(+) = a very-long-chain 3-oxoacyl-CoA + NADPH + H(+). Its pathway is lipid metabolism; fatty acid biosynthesis. Functionally, component of the microsomal membrane bound fatty acid elongation system, which produces the 26-carbon very long-chain fatty acids (VLCFA) from palmitate. Catalyzes the reduction of the 3-ketoacyl-CoA intermediate that is formed in each cycle of fatty acid elongation. VLCFAs serve as precursors for ceramide and sphingolipids. The polypeptide is Very-long-chain 3-oxoacyl-CoA reductase (Kluyveromyces lactis (strain ATCC 8585 / CBS 2359 / DSM 70799 / NBRC 1267 / NRRL Y-1140 / WM37) (Yeast)).